The following is a 341-amino-acid chain: Ribosomal RNA small subunit methyltransferase H (341 aa).

Residues 47-49 (GGY), Asp-64, Phe-91, Asp-109, and Gln-116 contribute to the S-adenosyl-L-methionine site.

This sequence belongs to the methyltransferase superfamily. RsmH family.

The protein resides in the cytoplasm. It catalyses the reaction cytidine(1402) in 16S rRNA + S-adenosyl-L-methionine = N(4)-methylcytidine(1402) in 16S rRNA + S-adenosyl-L-homocysteine + H(+). Its function is as follows. Specifically methylates the N4 position of cytidine in position 1402 (C1402) of 16S rRNA. The polypeptide is Ribosomal RNA small subunit methyltransferase H (Rhizobium leguminosarum bv. trifolii (strain WSM1325)).